The sequence spans 1376 residues: MLFVFILFLPSCLGYIGDFRCIQTVNYNGNNASAPSISTEAVDVSKGLGTYYVLDRVYLNATLLLTGYYPVDGSNYRNLALTGTNTLSLTWFKPPFLSEFNDGIFAKVQNLKTNTPTGATSYFPTIVIGSLFGNTSYTVVLEPYNNIIMASVCTYTICQLPYTPCKPNTNGNRVIGFWHTDVKPPICLLKRNFTFNVNAPWLYFHFYQQGGTFYAYYADKPSATTFLFSVYIGDILTQYFVLPFICTPTAGSTLLPLYWVTPLLKRQYLFNFNEKGVITSAVDCASSYISEIKCKTQSLLPSTGVYDLSGYTVQPVGVVYRRVPNLPDCKIEEWLTAKSVPSPLNWERRTFQNCNFNLSSLLRYVQAESLSCNNIDASKVYGMCFGSVSVDKFAIPRSRQIDLQIGNSGFLQTANYKIDTAATSCQLYYSLPKNNVTINNYNPSSWNRRYGFNDAGVFGKSKHDVAYAQQCFIVRPSYCPCAQPDIVSACTSQTKPMSAYCPTGTIHRECSLWNGPHLRSARVGSGTYTCECTCKPNPFDTYDLRCGQIKTIVNVGDHCEGLGVLEDKCGNSDPHKGCSCAHDSFIGWSHDTCLVNDHSQIFANILLNGINSGTTCSTDLQLPNTEVATGVCVRYDLYGITGQGVFKEVKADYYNSWQALLYDVNGNLNGFRDLTTNKTYTIRSCYSGRVSAAYHKEAPEPALLYRNINCSYVFTNNISREENPLNYFDSYLGCVVNADNRPDEALPNCDLRMGAGLCVDYSKSRRARRSVSTGYRLTTFEPYMPMLVNDSVQSVGGLYEMQIPTNFTIGHHEEFIQIRAPKVTIDCAAFVCGDNAACRQQLVEYGSFCDNVNAILNEVNNLLDNMQLQVASALMQGVTISSRLPDGISGPIDDINFSPLLGCIGSTCAEDGNGPSAMRGRSAIEDLLFDKVKLSDVGFVEAYNNCTGGQEVRDLLCVQSFNGIKVLPPVLSESQISGYTAGATAAAMFPPWTAAAGVPFSLNVQYRINGLGVTMNVLSENQKMIASAFNNALGAIQEGFDATNSALGKIQSVVNANAEALNNLLNQLSNRFGAISASLQEILTRLDRVEAKAQIDRLINGRLTALNAYISKQLSDSTLIKFSAAQAIEKVNECVKSQTTRINFCGNGNHILSLVQNAPYGLCFIHFSYVPTSFKTANVSPGLCISGDRGLAPKAGYFVQDNGEWKFTGSNYYYPEPITDKNSVVMISCAVNYTKAPEVFLNNSIPNLPDFKEELDKWFKNQTSIAPDLSLDFEKLNVTFLDLTYEMNRIQDAIKKLNESYINLKEVGTYEMYVKWPWYVWLLIGLAGVAVCVLLFFICCCTGCGSCCFRKCGSCCDEYGGHQDSIVIYNISAHED.

Residues 1 to 13 (MLFVFILFLPSCL) form the signal peptide. Over 14-1317 (GYIGDFRCIQ…GTYEMYVKWP (1304 aa)) the chain is Extracellular. The 282-residue stretch at 15–296 (YIGDFRCIQT…SYISEIKCKT (282 aa)) folds into the BetaCoV S1-NTD domain. Residues 15 to 330 (YIGDFRCIQT…RRVPNLPDCK (316 aa)) are receptor binding site. Cystine bridges form between Cys-21–Cys-158, Cys-153–Cys-187, Cys-165–Cys-246, Cys-284–Cys-294, and Cys-329–Cys-354. N-linked (GlcNAc...) asparagine; by host glycosylation is found at Asn-31, Asn-60, and Asn-134. A glycan (N-linked (GlcNAc...) asparagine; by host) is linked at Asn-192. One can recognise a BetaCoV S1-CTD domain in the interval 327-618 (PDCKIEEWLT…GINSGTTCST (292 aa)). Asn-357 carries an N-linked (GlcNAc...) asparagine; by host glycan. 2 disulfide bridges follow: Cys-372-Cys-425 and Cys-384-Cys-616. Residues Asn-435, Asn-677, Asn-709, Asn-717, Asn-789, and Asn-806 are each glycosylated (N-linked (GlcNAc...) asparagine; by host). 2 fusion peptide regions span residues 922–943 (SAIE…VEAY) and 941–961 (EAYN…VQSF). Asn-945 carries an N-linked (GlcNAc...) asparagine; by host glycan. Cys-946 and Cys-957 are oxidised to a cystine. The interval 1022-1072 (QKMIASAFNNALGAIQEGFDATNSALGKIQSVVNANAEALNNLLNQLSNRF) is heptad repeat 1. Residues 1051–1095 (QSVVNANAEALNNLLNQLSNRFGAISASLQEILTRLDRVEAKAQI) are a coiled coil. Residues Asn-1232, Asn-1242, Asn-1261, Asn-1277, and Asn-1298 are each glycosylated (N-linked (GlcNAc...) asparagine; by host). Residues 1266 to 1306 (APDLSLDFEKLNVTFLDLTYEMNRIQDAIKKLNESYINLKE) are heptad repeat 2. A coiled-coil region spans residues 1279–1307 (TFLDLTYEMNRIQDAIKKLNESYINLKEV). Residues 1318–1338 (WYVWLLIGLAGVAVCVLLFFI) traverse the membrane as a helical segment. Topologically, residues 1339–1376 (CCCTGCGSCCFRKCGSCCDEYGGHQDSIVIYNISAHED) are cytoplasmic. The short motif at 1372–1376 (SAHED) is the KxHxx element.

This sequence belongs to the betacoronaviruses spike protein family. As to quaternary structure, homotrimer; each monomer consists of a S1 and a S2 subunit. The resulting peplomers protrude from the virus surface as spikes. In terms of processing, specific enzymatic cleavages in vivo yield mature proteins. The precursor is processed into S1 and S2 by host cell furin or another cellular protease to yield the mature S1 and S2 proteins. Additionally, a second cleavage leads to the release of a fusion peptide after viral attachment to host cell receptor. The cytoplasmic Cys-rich domain is palmitoylated. Spike glycoprotein is digested within host endosomes.

It is found in the virion membrane. Its subcellular location is the host endoplasmic reticulum-Golgi intermediate compartment membrane. It localises to the host cell membrane. Its function is as follows. Attaches the virion to the cell membrane by interacting with host receptor, initiating the infection. Functionally, mediates fusion of the virion and cellular membranes by acting as a class I viral fusion protein. Under the current model, the protein has at least three conformational states: pre-fusion native state, pre-hairpin intermediate state, and post-fusion hairpin state. During viral and target cell membrane fusion, the coiled coil regions (heptad repeats) assume a trimer-of-hairpins structure, positioning the fusion peptide in close proximity to the C-terminal region of the ectodomain. The formation of this structure appears to drive apposition and subsequent fusion of viral and target cell membranes. In terms of biological role, acts as a viral fusion peptide which is unmasked following S2 cleavage occurring upon virus endocytosis. The polypeptide is Spike glycoprotein (Mus musculus (Mouse)).